The sequence spans 170 residues: Cyclic dof factor 4 (170 aa).

A disordered region spans residues 25-51; sequence NEEETHPPEQEATIAVRSSSSSDLTAE. Residues 58-112 form a Dof-type zinc finger; sequence IACPRCKSMETKFCYFNNYNVNQPRHFCKGCHRYWTAGGALRNVPVGAGRRKSKP. Zn(2+) contacts are provided by cysteine 60, cysteine 63, cysteine 85, and cysteine 88.

Expressed in the vasculature of cotyledons and hypocotyls, leaves and roots.

The protein localises to the nucleus. In terms of biological role, transcription factor that binds specifically to a 5'-AA[AG]G-3' consensus core sequence. Transcriptional repressor of 'CONSTANS' expression. Regulates a photoperiodic flowering response. This chain is Cyclic dof factor 4 (CDF4), found in Arabidopsis thaliana (Mouse-ear cress).